Here is a 386-residue protein sequence, read N- to C-terminus: Large ribosomal subunit protein uL4 (386 aa).

Over residues 341–357 (VEQRRLKEKQAKLDQKR) the composition is skewed to basic and acidic residues. The segment at 341–386 (VEQRRLKEKQAKLDQKRGIATPVEGAGKGRPRKTTAKPTKAKAGKK) is disordered. A compositionally biased stretch (basic residues) spans 369 to 386 (GRPRKTTAKPTKAKAGKK).

The protein belongs to the universal ribosomal protein uL4 family.

The chain is Large ribosomal subunit protein uL4 (RPL4) from Urechis caupo (Innkeeper worm).